We begin with the raw amino-acid sequence, 181 residues long: Germinal center-associated signaling and motility protein (181 aa).

Ser-102 carries the phosphoserine modification. Basic and acidic residues predominate over residues 117 to 128 (AERHKESSRGTE). The tract at residues 117-181 (AERHKESSRG…PYETHFSYPQ (65 aa)) is disordered. Tyr-150 bears the Phosphotyrosine mark.

As to quaternary structure, interacts with ACTB and MYH2; the interaction with MYH2 is increased by IL6-induced phosphorylation. Interacts (via C-terminus) with ARHGEF11 (via DH domain). Interacts with ARHGEF12. Interacts with SYK; the interaction increases after B-cell receptor stimulation, resulting in enhanced SYK autophosphorylation and activity. Phosphorylation on tyrosine residues can be induced by IL6. Phosphorylation is mediated by LYN. Post-translationally, targeted by the ubiquitin E3 ligase subunit FBXO10 to mediate its ubiquitination and degradation. As to expression, highly expressed in normal germinal center (GC) B-cells. Expressed in spleen and, to a lesser extent, bone marrow.

The protein localises to the cytoplasm. It is found in the cell membrane. Involved in the negative regulation of lymphocyte motility. It mediates the migration-inhibitory effects of IL6. Serves as a positive regulator of the RhoA signaling pathway. Enhancement of RhoA activation results in inhibition of lymphocyte and lymphoma cell motility by activation of its downstream effector ROCK. Is a regulator of B-cell receptor signaling, that acts through SYK kinase activation. This is Germinal center-associated signaling and motility protein (Gcsam) from Mus musculus (Mouse).